The primary structure comprises 85 residues: Antitoxin VapB4 (85 aa).

This sequence belongs to the phD/YefM antitoxin family. As to quaternary structure, interacts with cognate toxin VapC4.

Its function is as follows. Antitoxin component of a type II toxin-antitoxin (TA) system. Antitoxin that counteracts the effect of the VapC4 toxin. In Mycobacterium tuberculosis (strain CDC 1551 / Oshkosh), this protein is Antitoxin VapB4 (vapB4).